The chain runs to 71 residues: Prokaryotic ubiquitin-like protein Pup (71 aa).

Residues 1-18 (MATRDSGGQSQTGRSQQG) are compositionally biased toward low complexity. The interval 1-42 (MATRDSGGQSQTGRSQQGEEIEDVTTEASPEVAERHAEITED) is disordered. Residues 27 to 65 (EASPEVAERHAEITEDVDDLLDEIDSVLEENAEEFVRGY) form an ARC ATPase binding region. Residues 31–60 (EVAERHAEITEDVDDLLDEIDSVLEENAEE) adopt a coiled-coil conformation. An Isoglutamyl lysine isopeptide (Glu-Lys) (interchain with K-? in acceptor proteins) cross-link involves residue E71.

Belongs to the prokaryotic ubiquitin-like protein family. As to quaternary structure, strongly interacts with the proteasome-associated ATPase ARC through a hydrophobic interface; the interacting region of Pup lies in its C-terminal half. There is one Pup binding site per ARC hexamer ring.

Its pathway is protein degradation; proteasomal Pup-dependent pathway. Protein modifier that is covalently attached to lysine residues of substrate proteins, thereby targeting them for proteasomal degradation. The tagging system is termed pupylation. The sequence is that of Prokaryotic ubiquitin-like protein Pup from Salinispora arenicola (strain CNS-205).